The following is a 150-amino-acid chain: Transcriptional repressor NrdR (150 aa).

The segment at 3–34 (CPFCGQLDSKVVDSRPDKGGAAIRRRRECESC) is a zinc-finger region. The 91-residue stretch at 49–139 (PLVLKKDGRR…VYRSFKDVNE (91 aa)) folds into the ATP-cone domain.

The protein belongs to the NrdR family. The cofactor is Zn(2+).

Negatively regulates transcription of bacterial ribonucleotide reductase nrd genes and operons by binding to NrdR-boxes. The chain is Transcriptional repressor NrdR from Geobacter sulfurreducens (strain ATCC 51573 / DSM 12127 / PCA).